The primary structure comprises 38 residues: Potassium channel toxin alpha-KTx 3.3 (38 aa).

Cystine bridges form between cysteine 8-cysteine 28, cysteine 14-cysteine 33, and cysteine 18-cysteine 35. The interaction with Ca(2+)-activated K(+) channels stretch occupies residues 26–33 (GKCMNRKC).

It belongs to the short scorpion toxin superfamily. Potassium channel inhibitor family. Alpha-KTx 03 subfamily. Expressed by the venom gland.

The protein localises to the secreted. Its function is as follows. Potent inhibitor of shaker potassium channels as well as the mammalian homologs of shaker. This is Potassium channel toxin alpha-KTx 3.3 from Leiurus hebraeus (Hebrew deathstalker scorpion).